The chain runs to 182 residues: ATP-dependent protease subunit HslV (182 aa).

Thr6 is a catalytic residue. Residues Ala164, Cys167, and Thr170 each coordinate Na(+).

This sequence belongs to the peptidase T1B family. HslV subfamily. A double ring-shaped homohexamer of HslV is capped on each side by a ring-shaped HslU homohexamer. The assembly of the HslU/HslV complex is dependent on binding of ATP.

It is found in the cytoplasm. It carries out the reaction ATP-dependent cleavage of peptide bonds with broad specificity.. Allosterically activated by HslU binding. Functionally, protease subunit of a proteasome-like degradation complex believed to be a general protein degrading machinery. This is ATP-dependent protease subunit HslV from Borrelia garinii subsp. bavariensis (strain ATCC BAA-2496 / DSM 23469 / PBi) (Borreliella bavariensis).